The sequence spans 169 residues: Anaerobic nitrite reductase NSHB3 (169 aa).

The region spanning 15–165 (RFTEEQEALV…LVAAIKQGMK (151 aa)) is the Globin domain. A Homodimerization motif is present at residues 48 to 52 (EVAPS). The heme b site is built by Ser58, Lys72, His76, Arg106, Thr110, and His111. The short motif at 118-130 (DAHFEVAKFALLE) is the Homodimerization element.

The protein belongs to the plant globin family. Homodimer. It depends on heme b as a cofactor.

The protein localises to the cytoplasm. It is found in the nucleus. The enzyme catalyses Fe(III)-heme b-[protein] + nitric oxide + H2O = Fe(II)-heme b-[protein] + nitrite + 2 H(+). Functionally, phytoglobin that reduces nitrite to nitric oxide under anoxic conditions (e.g. during flooding or in waterlogged soil). May not function as an oxygen storage or transport protein. Has an unusually high affinity for O(2) through an hexacoordinate heme iron because of a very low dissociation constant. This Oryza sativa subsp. indica (Rice) protein is Anaerobic nitrite reductase NSHB3.